We begin with the raw amino-acid sequence, 334 residues long: Fructose-1,6-bisphosphatase class 1 (334 aa).

Mg(2+)-binding residues include E89, D112, L114, and D115. Residues 115–118 (DGSS), N208, Y241, 259–261 (YLY), and K271 each bind substrate. Residue E277 coordinates Mg(2+).

The protein belongs to the FBPase class 1 family. As to quaternary structure, homotetramer. It depends on Mg(2+) as a cofactor.

It is found in the cytoplasm. It carries out the reaction beta-D-fructose 1,6-bisphosphate + H2O = beta-D-fructose 6-phosphate + phosphate. The protein operates within carbohydrate biosynthesis; gluconeogenesis. In Pectobacterium atrosepticum (strain SCRI 1043 / ATCC BAA-672) (Erwinia carotovora subsp. atroseptica), this protein is Fructose-1,6-bisphosphatase class 1.